Consider the following 476-residue polypeptide: Transposase for transposon Tn5 (476 aa).

Positions 1–70 are interaction with DNA; that stretch reads MITSALHRAA…YRFIRNPNVS (70 aa). Mg(2+) contacts are provided by aspartate 97 and aspartate 188. Interaction with DNA stretches follow at residues 237 to 255 and 319 to 348; these read YQIS…KRKN and YTHR…EPDN. Residue glutamate 326 participates in Mg(2+) binding. Residues 369–476 form an important for dimerization region; the sequence is SFTLPQALRA…KDLMAQGIKI (108 aa).

It belongs to the transposase 11 family. Monomer. Homodimer of tnp (isoform 1), and heterodimer of tnp (isoform 1) and inh (isoform 2). Mg(2+) is required as a cofactor.

Its function is as follows. Mediates transposition of transposon Tn5 by a 'cut and paste' mechanism. First, the monomeric transposase binds the 19 bp inverted DNA repeats flanking the transposon. Then, dimerization of the DNA-bound transposase creates a synaptic DNA complex. After nicking of the first DNA strand, excision of the transposon proceeds through a series of intermediates. The transposase then mediates the insertion of the transposon at a new site by strand transfer. The activity of the wild-type transposase is very low, and is further inhibited by dimerization with the transposase inhibitor (inh). This Escherichia coli protein is Transposase for transposon Tn5 (tnpA).